The sequence spans 77 residues: MNLGFGILIFVLGLVIGLVIGFFVARNSMKSYLAKNPPISEEMMKSMMMSMGQKPSQKKLNQMMAQMKQQSEQSQKK.

Residues 5-25 (FGILIFVLGLVIGLVIGFFVA) traverse the membrane as a helical segment. Residues 50-77 (SMGQKPSQKKLNQMMAQMKQQSEQSQKK) are disordered.

It belongs to the UPF0154 family.

It is found in the cell membrane. The sequence is that of UPF0154 protein LCK_00994 from Leuconostoc citreum (strain KM20).